The following is a 223-amino-acid chain: Prolactin-3D4 (223 aa).

An N-terminal signal peptide occupies residues 1–28; it reads MQLTLTLSGSSMQLLLLVSNLLLWENMA. Cystine bridges form between Cys-80-Cys-198 and Cys-215-Cys-223. Asn-108 and Asn-157 each carry an N-linked (GlcNAc...) asparagine glycan.

The protein belongs to the somatotropin/prolactin family. N-glycosylated.

The protein localises to the secreted. This is Prolactin-3D4 (Prl3d4) from Rattus norvegicus (Rat).